Consider the following 927-residue polypeptide: Probable UDP-N-acetylglucosamine--peptide N-acetylglucosaminyltransferase SPINDLY (927 aa).

The tract at residues 1 to 31 (MGRPGMDSSEGRESNGVVPERNGGAVPAKQQ) is disordered. TPR repeat units follow at residues 34 to 67 (GKDT…DEAN), 68 to 101 (VEAL…DPGN), 102 to 135 (ACAL…DPSY), 143 to 176 (AIVL…DSHY), 177 to 210 (APAY…RPLY), 211 to 244 (AEAY…SPNF), 252 to 285 (AIAL…NWHY), 286 to 319 (ADAM…NPRC), 320 to 353 (AEAC…KPNF), 355 to 387 (QSLN…NSTY), and 388 to 421 (AEAY…DPDS). The interval 422–927 (RNAGQNRLLA…KVEANGHISR (506 aa)) is catalytic region.

This sequence belongs to the glycosyltransferase 41 family. O-GlcNAc transferase subfamily.

It localises to the nucleus. It carries out the reaction L-seryl-[protein] + UDP-N-acetyl-alpha-D-glucosamine = 3-O-(N-acetyl-beta-D-glucosaminyl)-L-seryl-[protein] + UDP + H(+). It catalyses the reaction L-threonyl-[protein] + UDP-N-acetyl-alpha-D-glucosamine = 3-O-(N-acetyl-beta-D-glucosaminyl)-L-threonyl-[protein] + UDP + H(+). It participates in protein modification; protein glycosylation. Its function is as follows. Probable O-linked N-acetylglucosamine transferase (OGT) involved in various processes such as gibberellin (GA) signaling pathway. OGTs catalyze the addition of nucleotide-activated sugars directly onto the polypeptide through O-glycosidic linkage with the hydroxyl of serine or threonine. Probably acts by adding O-linked sugars to yet unknown proteins. In Oryza sativa subsp. japonica (Rice), this protein is Probable UDP-N-acetylglucosamine--peptide N-acetylglucosaminyltransferase SPINDLY (SPY).